We begin with the raw amino-acid sequence, 287 residues long: ATP synthase gamma chain (287 aa).

This sequence belongs to the ATPase gamma chain family. As to quaternary structure, F-type ATPases have 2 components, CF(1) - the catalytic core - and CF(0) - the membrane proton channel. CF(1) has five subunits: alpha(3), beta(3), gamma(1), delta(1), epsilon(1). CF(0) has three main subunits: a, b and c.

Its subcellular location is the cell inner membrane. Its function is as follows. Produces ATP from ADP in the presence of a proton gradient across the membrane. The gamma chain is believed to be important in regulating ATPase activity and the flow of protons through the CF(0) complex. This Xylella fastidiosa (strain 9a5c) protein is ATP synthase gamma chain.